The primary structure comprises 177 residues: UPF0177 protein YxdF (177 aa).

The next 4 membrane-spanning stretches (helical) occupy residues 2–22 (TLVL…KNTL), 30–50 (IFWL…VTVL), 117–137 (ALVH…SFII), and 152–172 (IVHS…DTFF).

Belongs to the UPF0177 family.

The protein resides in the cell membrane. This Lactococcus lactis subsp. lactis (strain IL1403) (Streptococcus lactis) protein is UPF0177 protein YxdF (yxdF).